Consider the following 732-residue polypeptide: Polyribonucleotide nucleotidyltransferase (732 aa).

Residues D516 and D522 each coordinate Mg(2+). The 61-residue stretch at 582-642 (PSSHTITVHP…PKVIAACDYI (61 aa)) folds into the KH domain. The S1 motif domain occupies 659 to 726 (GDILKGKIKR…KGHKIELGLR (68 aa)).

It belongs to the polyribonucleotide nucleotidyltransferase family. Requires Mg(2+) as cofactor.

It localises to the cytoplasm. It carries out the reaction RNA(n+1) + phosphate = RNA(n) + a ribonucleoside 5'-diphosphate. In terms of biological role, involved in mRNA degradation. Catalyzes the phosphorolysis of single-stranded polyribonucleotides processively in the 3'- to 5'-direction. This is Polyribonucleotide nucleotidyltransferase from Nitratiruptor sp. (strain SB155-2).